A 259-amino-acid chain; its full sequence is Leucine-rich repeat-containing protein 61 (259 aa).

4 LRR repeats span residues 32–53 (SILL…GECL), 54–75 (GLEW…ASLR), 76–97 (QLAV…ATCE), and 98–119 (NLQS…QCLA). Residues 138 to 178 (NPLCANPSYWAAVRELLPGLKVIDGERVIGRGSEFYQLCRD) enclose the LRRCT domain.

This Homo sapiens (Human) protein is Leucine-rich repeat-containing protein 61 (LRRC61).